Consider the following 306-residue polypeptide: tRNA dimethylallyltransferase (306 aa).

Residue 9-16 (GPTAIGKT) participates in ATP binding. 11 to 16 (TAIGKT) serves as a coordination point for substrate. Residues 34 to 37 (DSMQ) are interaction with substrate tRNA.

This sequence belongs to the IPP transferase family. In terms of assembly, monomer. It depends on Mg(2+) as a cofactor.

It catalyses the reaction adenosine(37) in tRNA + dimethylallyl diphosphate = N(6)-dimethylallyladenosine(37) in tRNA + diphosphate. In terms of biological role, catalyzes the transfer of a dimethylallyl group onto the adenine at position 37 in tRNAs that read codons beginning with uridine, leading to the formation of N6-(dimethylallyl)adenosine (i(6)A). This chain is tRNA dimethylallyltransferase, found in Lactobacillus acidophilus (strain ATCC 700396 / NCK56 / N2 / NCFM).